Consider the following 177-residue polypeptide: Thaumatin-like protein (177 aa).

A signal peptide spans 1–26 (MASPATSSAVLVVVLVATLAAGGANA).

The protein belongs to the thaumatin family.

The protein localises to the secreted. The protein is Thaumatin-like protein of Oryza sativa subsp. japonica (Rice).